Reading from the N-terminus, the 294-residue chain is MFSLKKLKSKLVGVSFVFSGVIALGTGVGLTSEHKYEHSPTLVLHEGETNSVGPRKITSEPWFYPVVGAGAGLIVVSLLLGLGIGIPIAKKKERMMIQEREEHQKMVESLGIIEEQNKTEAIEPTEEVNTQEPTQPAGVNVANNPQMGINQPQINPQFGPNPQQRINPQCFGGPMQPNQMGMRPGFNQMPPQMGGMPPNQMGMRPGFNQMPPQMGGMPPRPNFPNQMPNMNQPRPGFRPQPGGGVPMGNKAGGGFNHPGTPMGPNRMNFPNQGMNQPPHMAGPRAGFPPQNGPR.

The next 2 helical transmembrane spans lie at 11 to 31 and 66 to 86; these read LVGV…VGLT and VVGA…GIGI. Tandem repeats lie at residues 172-193 and 194-214. The segment at 172 to 214 is 2 X 22 AA repeats; it reads GGPMQPNQMGMRPGFNQMPPQMGGMPPNQMGMRPGFNQMPPQM. The tract at residues 234 to 294 is disordered; that stretch reads RPGFRPQPGG…AGFPPQNGPR (61 aa). Over residues 241 to 256 the composition is skewed to gly residues; it reads PGGGVPMGNKAGGGFN.

It localises to the cell projection. The protein localises to the attachment organelle membrane. In terms of biological role, adhesin necessary for successful cytadherence and virulence. The protein is P32 adhesin (mgc2) of Mycoplasmoides gallisepticum (strain R(low / passage 15 / clone 2)) (Mycoplasma gallisepticum).